Here is a 278-residue protein sequence, read N- to C-terminus: Tryptophan 2,3-dioxygenase (278 aa).

Substrate contacts are provided by residues 47 to 51, Tyr109, and Arg113; that span reads FIVQH. His236 provides a ligand contact to heme. Residue Thr250 participates in substrate binding.

The protein belongs to the tryptophan 2,3-dioxygenase family. Homotetramer. Requires heme as cofactor.

The enzyme catalyses L-tryptophan + O2 = N-formyl-L-kynurenine. The protein operates within amino-acid degradation; L-tryptophan degradation via kynurenine pathway; L-kynurenine from L-tryptophan: step 1/2. In terms of biological role, heme-dependent dioxygenase that catalyzes the oxidative cleavage of the L-tryptophan (L-Trp) pyrrole ring and converts L-tryptophan to N-formyl-L-kynurenine. Catalyzes the oxidative cleavage of the indole moiety. This is Tryptophan 2,3-dioxygenase from Ralstonia pickettii (strain 12J).